Consider the following 316-residue polypeptide: Transaldolase (316 aa).

Catalysis depends on Lys132, which acts as the Schiff-base intermediate with substrate.

The protein belongs to the transaldolase family. Type 1 subfamily. As to quaternary structure, homodimer.

The protein resides in the cytoplasm. It carries out the reaction D-sedoheptulose 7-phosphate + D-glyceraldehyde 3-phosphate = D-erythrose 4-phosphate + beta-D-fructose 6-phosphate. The protein operates within carbohydrate degradation; pentose phosphate pathway; D-glyceraldehyde 3-phosphate and beta-D-fructose 6-phosphate from D-ribose 5-phosphate and D-xylulose 5-phosphate (non-oxidative stage): step 2/3. Transaldolase is important for the balance of metabolites in the pentose-phosphate pathway. The sequence is that of Transaldolase from Vibrio vulnificus (strain YJ016).